A 306-amino-acid chain; its full sequence is 4-hydroxy-3-methylbut-2-enyl diphosphate reductase (306 aa).

Cys-12 is a [4Fe-4S] cluster binding site. (2E)-4-hydroxy-3-methylbut-2-enyl diphosphate contacts are provided by His-41 and His-74. Residues His-41 and His-74 each contribute to the dimethylallyl diphosphate site. The isopentenyl diphosphate site is built by His-41 and His-74. A [4Fe-4S] cluster-binding site is contributed by Cys-96. (2E)-4-hydroxy-3-methylbut-2-enyl diphosphate is bound at residue His-124. Position 124 (His-124) interacts with dimethylallyl diphosphate. An isopentenyl diphosphate-binding site is contributed by His-124. The active-site Proton donor is Glu-126. Thr-164 provides a ligand contact to (2E)-4-hydroxy-3-methylbut-2-enyl diphosphate. Position 194 (Cys-194) interacts with [4Fe-4S] cluster. (2E)-4-hydroxy-3-methylbut-2-enyl diphosphate contacts are provided by Ser-222, Ser-223, Asn-224, and Ser-266. Ser-222, Ser-223, Asn-224, and Ser-266 together coordinate dimethylallyl diphosphate. Isopentenyl diphosphate contacts are provided by Ser-222, Ser-223, Asn-224, and Ser-266.

Belongs to the IspH family. It depends on [4Fe-4S] cluster as a cofactor.

The catalysed reaction is isopentenyl diphosphate + 2 oxidized [2Fe-2S]-[ferredoxin] + H2O = (2E)-4-hydroxy-3-methylbut-2-enyl diphosphate + 2 reduced [2Fe-2S]-[ferredoxin] + 2 H(+). It catalyses the reaction dimethylallyl diphosphate + 2 oxidized [2Fe-2S]-[ferredoxin] + H2O = (2E)-4-hydroxy-3-methylbut-2-enyl diphosphate + 2 reduced [2Fe-2S]-[ferredoxin] + 2 H(+). The protein operates within isoprenoid biosynthesis; dimethylallyl diphosphate biosynthesis; dimethylallyl diphosphate from (2E)-4-hydroxy-3-methylbutenyl diphosphate: step 1/1. It functions in the pathway isoprenoid biosynthesis; isopentenyl diphosphate biosynthesis via DXP pathway; isopentenyl diphosphate from 1-deoxy-D-xylulose 5-phosphate: step 6/6. In terms of biological role, catalyzes the conversion of 1-hydroxy-2-methyl-2-(E)-butenyl 4-diphosphate (HMBPP) into a mixture of isopentenyl diphosphate (IPP) and dimethylallyl diphosphate (DMAPP). Acts in the terminal step of the DOXP/MEP pathway for isoprenoid precursor biosynthesis. The polypeptide is 4-hydroxy-3-methylbut-2-enyl diphosphate reductase (Dechloromonas aromatica (strain RCB)).